Consider the following 549-residue polypeptide: Cation/acetate symporter ActP (549 aa).

Helical transmembrane passes span 33–53 (WQAIIMFLIFVVFTLGITYWA), 77–97 (LAIAGDYMSAASFLGISALVF), 103–123 (GLIYSLGFLVGWPIILFLIAE), 148–168 (ILSACGSLVVVALYLIAQMVG), 183–203 (IAVVLVGVLMMMYVLFGGMLA), 206–226 (WVQIIKAVLLLFGASFMAFMV), 262–282 (ISALSLGLGLMFGTAGLPHIL), 303–323 (GFMGYFYILTFIIGFGAIMLV), 355–375 (LFLGFISAVAFATILAVVAGL), 404–424 (VSKITVLILGVIAIILGMLFE), 428–448 (IAFMVGLAFAIAASCNFPIIL), 464–484 (GGWLGLITAVVLMILGPTIWV), and 493–513 (IFPYEYPALFSISVAFLGIWF).

The protein belongs to the sodium:solute symporter (SSF) (TC 2.A.21) family.

It localises to the cell inner membrane. Functionally, transports acetate. The protein is Cation/acetate symporter ActP of Shigella boydii serotype 4 (strain Sb227).